The primary structure comprises 352 residues: Very-long-chain 3-oxoacyl-CoA reductase (352 aa).

The helical transmembrane segment at 20 to 40 threads the bilayer; that stretch reads TLWFIFIFGLLKLVPFALRFL. Positions 66, 120, 147, 228, 232, 261, and 263 each coordinate NADP(+). The active-site Proton donor is tyrosine 228. Lysine 232 functions as the Lowers pKa of active site Tyr in the catalytic mechanism.

Belongs to the short-chain dehydrogenases/reductases (SDR) family.

It is found in the endoplasmic reticulum membrane. It carries out the reaction a very-long-chain (3R)-3-hydroxyacyl-CoA + NADP(+) = a very-long-chain 3-oxoacyl-CoA + NADPH + H(+). The protein operates within lipid metabolism; fatty acid biosynthesis. Its function is as follows. Component of the microsomal membrane bound fatty acid elongation system, which produces the 26-carbon very long-chain fatty acids (VLCFA) from palmitate. Catalyzes the reduction of the 3-ketoacyl-CoA intermediate that is formed in each cycle of fatty acid elongation. VLCFAs serve as precursors for ceramide and sphingolipids. The sequence is that of Very-long-chain 3-oxoacyl-CoA reductase from Candida glabrata (strain ATCC 2001 / BCRC 20586 / JCM 3761 / NBRC 0622 / NRRL Y-65 / CBS 138) (Yeast).